The primary structure comprises 217 residues: Pyridoxine/pyridoxamine 5'-phosphate oxidase (217 aa).

Substrate is bound by residues 13 to 16 (RREY) and Lys71. FMN is bound by residues 66–71 (RIVLLK), 81–82 (YT), Arg87, Lys88, and Gln110. Positions 128, 132, and 136 each coordinate substrate. FMN-binding positions include 145 to 146 (QS) and Trp190. 196–198 (RLH) is a binding site for substrate. Arg200 serves as a coordination point for FMN.

It belongs to the pyridoxamine 5'-phosphate oxidase family. Homodimer. FMN is required as a cofactor.

It catalyses the reaction pyridoxamine 5'-phosphate + O2 + H2O = pyridoxal 5'-phosphate + H2O2 + NH4(+). The catalysed reaction is pyridoxine 5'-phosphate + O2 = pyridoxal 5'-phosphate + H2O2. The protein operates within cofactor metabolism; pyridoxal 5'-phosphate salvage; pyridoxal 5'-phosphate from pyridoxamine 5'-phosphate: step 1/1. Its pathway is cofactor metabolism; pyridoxal 5'-phosphate salvage; pyridoxal 5'-phosphate from pyridoxine 5'-phosphate: step 1/1. In terms of biological role, catalyzes the oxidation of either pyridoxine 5'-phosphate (PNP) or pyridoxamine 5'-phosphate (PMP) into pyridoxal 5'-phosphate (PLP). This Photorhabdus laumondii subsp. laumondii (strain DSM 15139 / CIP 105565 / TT01) (Photorhabdus luminescens subsp. laumondii) protein is Pyridoxine/pyridoxamine 5'-phosphate oxidase.